The following is a 307-amino-acid chain: Ribosomal RNA small subunit methyltransferase H (307 aa).

Residues 32 to 34 (AGH), aspartate 51, isoleucine 82, aspartate 99, and glutamine 106 contribute to the S-adenosyl-L-methionine site.

This sequence belongs to the methyltransferase superfamily. RsmH family.

Its subcellular location is the cytoplasm. The catalysed reaction is cytidine(1402) in 16S rRNA + S-adenosyl-L-methionine = N(4)-methylcytidine(1402) in 16S rRNA + S-adenosyl-L-homocysteine + H(+). Functionally, specifically methylates the N4 position of cytidine in position 1402 (C1402) of 16S rRNA. In Campylobacter concisus (strain 13826), this protein is Ribosomal RNA small subunit methyltransferase H.